The primary structure comprises 264 residues: Thiazole synthase (264 aa).

The Schiff-base intermediate with DXP role is filled by Lys-106. 1-deoxy-D-xylulose 5-phosphate contacts are provided by residues Gly-167, 193–194 (AG), and 215–216 (NT).

The protein belongs to the ThiG family. In terms of assembly, homotetramer. Forms heterodimers with either ThiH or ThiS.

The protein resides in the cytoplasm. The catalysed reaction is [ThiS sulfur-carrier protein]-C-terminal-Gly-aminoethanethioate + 2-iminoacetate + 1-deoxy-D-xylulose 5-phosphate = [ThiS sulfur-carrier protein]-C-terminal Gly-Gly + 2-[(2R,5Z)-2-carboxy-4-methylthiazol-5(2H)-ylidene]ethyl phosphate + 2 H2O + H(+). Its pathway is cofactor biosynthesis; thiamine diphosphate biosynthesis. Functionally, catalyzes the rearrangement of 1-deoxy-D-xylulose 5-phosphate (DXP) to produce the thiazole phosphate moiety of thiamine. Sulfur is provided by the thiocarboxylate moiety of the carrier protein ThiS. In vitro, sulfur can be provided by H(2)S. In Xylella fastidiosa (strain Temecula1 / ATCC 700964), this protein is Thiazole synthase.